The chain runs to 25 residues: Ranatuerin-1 (25 aa).

Cysteine 19 and cysteine 25 are oxidised to a cystine.

This sequence belongs to the frog skin active peptide (FSAP) family. Ranatuerin subfamily. Expressed by the skin glands.

The protein resides in the secreted. Its function is as follows. Antibacterial activity against Gram-positive bacterium S.aureus (MIC=50 uM) and Gram-negative bacterium E.coli (MIC=2 uM). Has activity against C.albicans (MIC=70 uM). Shows no detectable hemolytic activity towards human erythrocytes. The protein is Ranatuerin-1 of Aquarana catesbeiana (American bullfrog).